The primary structure comprises 317 residues: Methionyl-tRNA formyltransferase (317 aa).

110 to 113 (SLLP) contacts (6S)-5,6,7,8-tetrahydrofolate.

Belongs to the Fmt family.

It catalyses the reaction L-methionyl-tRNA(fMet) + (6R)-10-formyltetrahydrofolate = N-formyl-L-methionyl-tRNA(fMet) + (6S)-5,6,7,8-tetrahydrofolate + H(+). Its function is as follows. Attaches a formyl group to the free amino group of methionyl-tRNA(fMet). The formyl group appears to play a dual role in the initiator identity of N-formylmethionyl-tRNA by promoting its recognition by IF2 and preventing the misappropriation of this tRNA by the elongation apparatus. The polypeptide is Methionyl-tRNA formyltransferase (Bacillus pumilus (strain SAFR-032)).